The chain runs to 278 residues: Biotin synthase (278 aa).

Positions 1–227 (MQIMLCAISN…NAHIMVAGGR (227 aa)) constitute a Radical SAM core domain. Positions 16, 20, and 23 each coordinate [4Fe-4S] cluster. Cys60, Cys95, and Cys153 together coordinate [2Fe-2S] cluster.

The protein belongs to the radical SAM superfamily. Biotin synthase family. As to quaternary structure, homodimer. [4Fe-4S] cluster is required as a cofactor. The cofactor is [2Fe-2S] cluster.

It carries out the reaction (4R,5S)-dethiobiotin + (sulfur carrier)-SH + 2 reduced [2Fe-2S]-[ferredoxin] + 2 S-adenosyl-L-methionine = (sulfur carrier)-H + biotin + 2 5'-deoxyadenosine + 2 L-methionine + 2 oxidized [2Fe-2S]-[ferredoxin]. It participates in cofactor biosynthesis; biotin biosynthesis; biotin from 7,8-diaminononanoate: step 2/2. Its function is as follows. Catalyzes the conversion of dethiobiotin (DTB) to biotin by the insertion of a sulfur atom into dethiobiotin via a radical-based mechanism. The polypeptide is Biotin synthase (Campylobacter lari (strain RM2100 / D67 / ATCC BAA-1060)).